Reading from the N-terminus, the 109-residue chain is Hainantoxin-XVIII-2 (109 aa).

A signal peptide spans 1 to 18 (MKLSIIIIATSLVIAVVA). The propeptide occupies 19–46 (FPSKDSKAIENDKTEQRMEIVVQETARA). 3 disulfides stabilise this stretch: Cys47–Cys62, Cys59–Cys108, and Cys61–Cys81.

The protein belongs to the neurotoxin 25 family. F7 subfamily. As to expression, expressed by the venom gland.

It is found in the secreted. Putative ion channel inhibitor. The chain is Hainantoxin-XVIII-2 from Cyriopagopus hainanus (Chinese bird spider).